The following is a 101-amino-acid chain: uncharacterized protein (101 aa).

The protein resides in the cytoplasm. This is an uncharacterized protein from Saccharomyces cerevisiae (strain ATCC 204508 / S288c) (Baker's yeast).